Consider the following 520-residue polypeptide: Laccase-4 (520 aa).

A signal peptide spans 1 to 18 (MGRFSSLCALTAVIHSFG). Plastocyanin-like domains lie at 24–149 (IGPV…MVVY), 161–303 (VDDE…ILRY), and 370–491 (TVPV…FSED). 2 N-linked (GlcNAc...) asparagine glycosylation sites follow: Asn-73 and Asn-76. The Cu cation site is built by His-86, His-88, His-131, and His-133. 2 cysteine pairs are disulfide-bonded: Cys-107/Cys-509 and Cys-139/Cys-227. 2 N-linked (GlcNAc...) asparagine glycosylation sites follow: Asn-239 and Asn-399. Positions 418, 421, 423, 473, 474, 475, and 479 each coordinate Cu cation. A glycan (N-linked (GlcNAc...) asparagine) is linked at Asn-497.

The protein belongs to the multicopper oxidase family. In terms of assembly, homodimer. Requires Cu cation as cofactor.

Its subcellular location is the secreted. The enzyme catalyses 4 hydroquinone + O2 = 4 benzosemiquinone + 2 H2O. Its function is as follows. Lignin degradation and detoxification of lignin-derived products. The protein is Laccase-4 (LCC4) of Trametes villosa (White-rot fungus).